The primary structure comprises 201 residues: MELVMKDAQGALTVSETTFGRDFNEALVHQVVVAYAAGARQGTRAQKTRAEVSGSGKKPWRQKGTGRARSGSIKSPIWRSGGVTFAAKPQDHSQKVNKKMYRGALKSILSELVRQDRLIVVEKFSVEAPKTKLLVQKLKEMALEDVLIITNEVDENLFLAARNLYKVDVRDVAGIDPVSLIAFDKVVMTADAVKQVEEMLA.

The segment at 44-71 (RAQKTRAEVSGSGKKPWRQKGTGRARSG) is disordered.

The protein belongs to the universal ribosomal protein uL4 family. In terms of assembly, part of the 50S ribosomal subunit.

In terms of biological role, one of the primary rRNA binding proteins, this protein initially binds near the 5'-end of the 23S rRNA. It is important during the early stages of 50S assembly. It makes multiple contacts with different domains of the 23S rRNA in the assembled 50S subunit and ribosome. Forms part of the polypeptide exit tunnel. This Photorhabdus laumondii subsp. laumondii (strain DSM 15139 / CIP 105565 / TT01) (Photorhabdus luminescens subsp. laumondii) protein is Large ribosomal subunit protein uL4.